The following is a 352-amino-acid chain: Potassium/proton antiporter CemA (352 aa).

3 helical membrane passes run 52–72, 227–247, and 312–332; these read VLVS…IHFF, IAAL…IILF, and IILL…KYWI.

It belongs to the CemA family.

The protein localises to the plastid. Its subcellular location is the chloroplast inner membrane. It catalyses the reaction K(+)(in) + H(+)(out) = K(+)(out) + H(+)(in). In terms of biological role, contributes to K(+)/H(+) antiport activity by supporting proton efflux to control proton extrusion and homeostasis in chloroplasts in a light-dependent manner to modulate photosynthesis. Prevents excessive induction of non-photochemical quenching (NPQ) under continuous-light conditions. Indirectly promotes efficient inorganic carbon uptake into chloroplasts. This is Potassium/proton antiporter CemA from Oltmannsiellopsis viridis (Marine flagellate).